Consider the following 195-residue polypeptide: Imidazoleglycerol-phosphate dehydratase (195 aa).

This sequence belongs to the imidazoleglycerol-phosphate dehydratase family.

The protein resides in the cytoplasm. It catalyses the reaction D-erythro-1-(imidazol-4-yl)glycerol 3-phosphate = 3-(imidazol-4-yl)-2-oxopropyl phosphate + H2O. Its pathway is amino-acid biosynthesis; L-histidine biosynthesis; L-histidine from 5-phospho-alpha-D-ribose 1-diphosphate: step 6/9. The polypeptide is Imidazoleglycerol-phosphate dehydratase (Roseobacter denitrificans (strain ATCC 33942 / OCh 114) (Erythrobacter sp. (strain OCh 114))).